The following is a 714-amino-acid chain: Phosphoribosylformylglycinamidine synthase subunit PurL (714 aa).

The active site involves H34. Y37 is a binding site for ATP. E78 serves as a coordination point for Mg(2+). Residues 79 to 82 and R101 each bind substrate; that span reads SHNH. H80 serves as the catalytic Proton acceptor. D102 serves as a coordination point for Mg(2+). Residue Q226 coordinates substrate. D254 contacts Mg(2+). Residue 298–300 coordinates substrate; it reads ESQ. ATP is bound by residues D474 and G511. N512 contributes to the Mg(2+) binding site. S514 contacts substrate.

Belongs to the FGAMS family. Monomer. Part of the FGAM synthase complex composed of 1 PurL, 1 PurQ and 2 PurS subunits.

It localises to the cytoplasm. It catalyses the reaction N(2)-formyl-N(1)-(5-phospho-beta-D-ribosyl)glycinamide + L-glutamine + ATP + H2O = 2-formamido-N(1)-(5-O-phospho-beta-D-ribosyl)acetamidine + L-glutamate + ADP + phosphate + H(+). It functions in the pathway purine metabolism; IMP biosynthesis via de novo pathway; 5-amino-1-(5-phospho-D-ribosyl)imidazole from N(2)-formyl-N(1)-(5-phospho-D-ribosyl)glycinamide: step 1/2. Its function is as follows. Part of the phosphoribosylformylglycinamidine synthase complex involved in the purines biosynthetic pathway. Catalyzes the ATP-dependent conversion of formylglycinamide ribonucleotide (FGAR) and glutamine to yield formylglycinamidine ribonucleotide (FGAM) and glutamate. The FGAM synthase complex is composed of three subunits. PurQ produces an ammonia molecule by converting glutamine to glutamate. PurL transfers the ammonia molecule to FGAR to form FGAM in an ATP-dependent manner. PurS interacts with PurQ and PurL and is thought to assist in the transfer of the ammonia molecule from PurQ to PurL. The polypeptide is Phosphoribosylformylglycinamidine synthase subunit PurL (Methanothermobacter thermautotrophicus (strain ATCC 29096 / DSM 1053 / JCM 10044 / NBRC 100330 / Delta H) (Methanobacterium thermoautotrophicum)).